The primary structure comprises 434 residues: Nicotinate phosphoribosyltransferase (434 aa).

H242 is modified (phosphohistidine; by autocatalysis).

This sequence belongs to the NAPRTase family. In terms of processing, transiently phosphorylated on a His residue during the reaction cycle. Phosphorylation strongly increases the affinity for substrates and increases the rate of nicotinate D-ribonucleotide production. Dephosphorylation regenerates the low-affinity form of the enzyme, leading to product release.

It catalyses the reaction nicotinate + 5-phospho-alpha-D-ribose 1-diphosphate + ATP + H2O = nicotinate beta-D-ribonucleotide + ADP + phosphate + diphosphate. The protein operates within cofactor biosynthesis; NAD(+) biosynthesis; nicotinate D-ribonucleotide from nicotinate: step 1/1. Its function is as follows. Catalyzes the synthesis of beta-nicotinate D-ribonucleotide from nicotinate and 5-phospho-D-ribose 1-phosphate at the expense of ATP. The polypeptide is Nicotinate phosphoribosyltransferase (Brucella anthropi (strain ATCC 49188 / DSM 6882 / CCUG 24695 / JCM 21032 / LMG 3331 / NBRC 15819 / NCTC 12168 / Alc 37) (Ochrobactrum anthropi)).